The sequence spans 501 residues: Probable malate:quinone oxidoreductase (501 aa).

This sequence belongs to the MQO family. FAD is required as a cofactor.

The catalysed reaction is (S)-malate + a quinone = a quinol + oxaloacetate. The protein operates within carbohydrate metabolism; tricarboxylic acid cycle; oxaloacetate from (S)-malate (quinone route): step 1/1. The protein is Probable malate:quinone oxidoreductase of Mycolicibacterium paratuberculosis (strain ATCC BAA-968 / K-10) (Mycobacterium paratuberculosis).